We begin with the raw amino-acid sequence, 422 residues long: 5-methylthioadenosine/S-adenosylhomocysteine deaminase 1 (422 aa).

Zn(2+)-binding residues include His56 and His58. The substrate site is built by Glu85 and His174. Residue His201 participates in Zn(2+) binding. Substrate-binding residues include Glu204 and Asp290. Zn(2+) is bound at residue Asp290.

Belongs to the metallo-dependent hydrolases superfamily. MTA/SAH deaminase family. The cofactor is Zn(2+).

The enzyme catalyses S-adenosyl-L-homocysteine + H2O + H(+) = S-inosyl-L-homocysteine + NH4(+). The catalysed reaction is S-methyl-5'-thioadenosine + H2O + H(+) = S-methyl-5'-thioinosine + NH4(+). In terms of biological role, catalyzes the deamination of 5-methylthioadenosine and S-adenosyl-L-homocysteine into 5-methylthioinosine and S-inosyl-L-homocysteine, respectively. Is also able to deaminate adenosine. The polypeptide is 5-methylthioadenosine/S-adenosylhomocysteine deaminase 1 (Archaeoglobus fulgidus (strain ATCC 49558 / DSM 4304 / JCM 9628 / NBRC 100126 / VC-16)).